We begin with the raw amino-acid sequence, 82 residues long: Progonadoliberin-3 (82 aa).

The first 23 residues, 1 to 23 (MDLSNRTVVQVVVLALVAQVTLS), serve as a signal peptide directing secretion. Pyrrolidone carboxylic acid is present on Gln24. The residue at position 33 (Gly33) is a Glycine amide.

It belongs to the GnRH family. As to expression, brain.

It is found in the secreted. Stimulates the secretion of gonadotropins. This is Progonadoliberin-3 (gnrh3) from Oncorhynchus nerka (Sockeye salmon).